The primary structure comprises 71 residues: Large ribosomal subunit protein uL29 (71 aa).

Positions 32-51 (GVNKSTGGAPSNPGKISETK) are disordered.

This sequence belongs to the universal ribosomal protein uL29 family.

The protein is Large ribosomal subunit protein uL29 of Methanococcus maripaludis (strain DSM 14266 / JCM 13030 / NBRC 101832 / S2 / LL).